The primary structure comprises 123 residues: Urotensin-2 (123 aa).

A signal peptide spans 1 to 20; sequence MDRVPFCCLLFVGLLNPLLS. Positions 21–104 are excised as a propeptide; sequence FPVTDTGEMS…TVLSRLLART (84 aa). Positions 63 to 91 are disordered; sequence EAEGSLGQADPSAETPTPRGSLRKALTGQ. Cys117 and Cys122 are joined by a disulfide.

This sequence belongs to the urotensin-2 family. As to expression, brain specific.

It is found in the secreted. Functionally, highly potent vasoconstrictor. The protein is Urotensin-2 (Uts2) of Rattus norvegicus (Rat).